The primary structure comprises 102 residues: MDVDIISEEENPMLHRTDIRFETTHEEATPSRLSVRDSLAAKLDKASEEVVVHELDTKFGMRKTIGYAKVYDTAEDALDVEQEYMLERNKIGGEVEADAEEA.

It belongs to the eukaryotic ribosomal protein eS24 family.

This chain is Small ribosomal subunit protein eS24, found in Halorubrum lacusprofundi (strain ATCC 49239 / DSM 5036 / JCM 8891 / ACAM 34).